The sequence spans 422 residues: Synaptotagmin-2 (422 aa).

The segment at 1-43 is disordered; the sequence is MRNIFKRNQEPNVAPATTTATMPLAPVAPADNSTESTGPGESQ. The Vesicular portion of the chain corresponds to 1–60; it reads MRNIFKRNQEPNVAPATTTATMPLAPVAPADNSTESTGPGESQEDMFAKLKEKFFNEINK. Positions 14–30 are enriched in low complexity; that stretch reads APATTTATMPLAPVAPA. The span at 31–40 shows a compositional bias: polar residues; it reads DNSTESTGPG. Residue Asn32 is glycosylated (N-linked (GlcNAc...) asparagine). A helical transmembrane segment spans residues 61–87; sequence IPLPPWALIAMAVVAGLLLLTCCFCIC. Residues 88 to 422 are Cytoplasmic-facing; that stretch reads KKCCCKKKKN…EVDALLGKNK (335 aa). The disordered stretch occupies residues 102-141; it reads GKGMKNAMNMKDMKGGQDDDDAETGLTEGEGEGEEEKEPE. The segment covering 119–139 has biased composition (acidic residues); that stretch reads DDDDAETGLTEGEGEGEEEKE. A phosphothreonine mark is found at Thr125 and Thr128. The tract at residues 136–382 is phospholipid binding; it reads EEKEPENLGK…AIGKIFVGSN (247 aa). 2 consecutive C2 domains span residues 142-261 and 273-406; these read NLGK…EEWR and KLGD…AQWH. Ca(2+)-binding residues include Leu172, Asp173, and Asp179. The residue at position 202 (Thr202) is a Phosphothreonine. Tyr230 bears the Phosphotyrosine mark. Ca(2+) is bound by residues Asp231, Phe232, Asp233, Ser236, Lys237, Asp239, Asp304, Asp310, Asp364, and Asp366. Thr386 carries the post-translational modification Phosphothreonine.

It belongs to the synaptotagmin family. Homotetramer. Heterodimer; heterodimerizes with SYT1 in presence of calcium. Interacts with SCAMP5. Interacts with STON2. Interacts with PRRT2. As to quaternary structure, (Microbial infection) Interacts with C.botulinum neurotoxin type B (BoNT/B, botB). In terms of assembly, (Microbial infection) Interacts with C.botulinum neurotoxin type G (BoNT/G, botG). The cofactor is Ca(2+). Phosphorylation at Thr-202 by WNK1, changes the calcium requirement for SYT2-binding to phospholipid membranes.

Its subcellular location is the cytoplasmic vesicle. The protein localises to the secretory vesicle. It localises to the synaptic vesicle membrane. The protein resides in the chromaffin granule membrane. It is found in the cytoplasm. Exhibits calcium-dependent phospholipid and inositol polyphosphate binding properties. May have a regulatory role in the membrane interactions during trafficking of synaptic vesicles at the active zone of the synapse. Plays a role in dendrite formation by melanocytes. In terms of biological role, (Microbial infection) Receptor for C.botulinum neurotoxin type B (BoNT/B, botB); interaction is improved in the presence of gangliosides. The toxin binds via the vesicular domain (residues 47-60). Its function is as follows. (Microbial infection) Receptor for C.botulinum neurotoxin type G (BoNT/G, botG); gangliosides are not required for (or only very slightly improve) binding to a membrane-anchored receptor fragment. The toxin binds via the vesicular domain (residues 47-55). This is Synaptotagmin-2 from Mus musculus (Mouse).